Reading from the N-terminus, the 478-residue chain is Proline--tRNA ligase (478 aa).

This sequence belongs to the class-II aminoacyl-tRNA synthetase family. ProS type 3 subfamily. Homodimer.

The protein localises to the cytoplasm. The catalysed reaction is tRNA(Pro) + L-proline + ATP = L-prolyl-tRNA(Pro) + AMP + diphosphate. Catalyzes the attachment of proline to tRNA(Pro) in a two-step reaction: proline is first activated by ATP to form Pro-AMP and then transferred to the acceptor end of tRNA(Pro). The polypeptide is Proline--tRNA ligase (Clostridium botulinum (strain Okra / Type B1)).